We begin with the raw amino-acid sequence, 1564 residues long: Abnormal spindle-like microcephaly-associated protein homolog (1564 aa).

31 IQ domains span residues 31 to 60, 220 to 251, 270 to 299, 293 to 322, 366 to 395, 389 to 420, 439 to 468, 462 to 491, 512 to 541, 535 to 566, 608 to 639, 658 to 687, 681 to 712, 731 to 762, 754 to 785, 804 to 835, 827 to 856, 877 to 908, 900 to 931, 949 to 980, 972 to 1003, 1022 to 1053, 1045 to 1076, 1095 to 1126, 1168 to 1199, 1304 to 1333, 1327 to 1358, 1377 to 1406, 1452 to 1483, 1474 to 1503, and 1500 to 1531; these read YLWA…MLKS, LKKN…VIIQ, TRSA…SVIK, ILTS…ATIK, MRES…AVIS, QRKA…IIIQ, VKKA…AAVK, QSVA…SIIK, AKAA…AAMK, EHQA…LVIQ, QHTC…LLIQ, TKAA…AAIT, CNTA…IIIQ, LKKT…TFIK, MHRA…IVIQ, ILKA…TLIQ, LRIA…ITRT, LRHS…TLIQ, MHIA…IWIQ, LQNA…AFIQ, MHRA…VVIQ, QRYS…ILIQ, MYFS…IFIQ, LRKA…VLIQ, QWHS…IIIQ, HTQA…AATR, MHLA…VIIQ, VQKS…EKMA, QSRA…RIQS, QKCA…QKRA, and QKRA…VVLQ.

It is found in the cytoplasm. Its subcellular location is the nucleus. Functionally, probable role in mitotic spindle regulation and coordination of mitotic processes. May have a preferential role in regulating neurogenesis. In Ateles geoffroyi (Black-handed spider monkey), this protein is Abnormal spindle-like microcephaly-associated protein homolog (ASPM).